A 111-amino-acid polypeptide reads, in one-letter code: Ribonuclease P protein component 1 (111 aa).

The protein belongs to the eukaryotic/archaeal RNase P protein component 1 family. In terms of assembly, consists of a catalytic RNA component and at least 4-5 protein subunits.

The protein resides in the cytoplasm. The catalysed reaction is Endonucleolytic cleavage of RNA, removing 5'-extranucleotides from tRNA precursor.. Part of ribonuclease P, a protein complex that generates mature tRNA molecules by cleaving their 5'-ends. The polypeptide is Ribonuclease P protein component 1 (Hyperthermus butylicus (strain DSM 5456 / JCM 9403 / PLM1-5)).